The primary structure comprises 195 residues: Interferon tau-5 (195 aa).

Residues 1-23 (MAFVLSLLMALVLVSYGPGGSLG) form the signal peptide. Cystine bridges form between Cys24–Cys122 and Cys52–Cys162.

It belongs to the alpha/beta interferon family. IFN-alphaII subfamily. In terms of tissue distribution, constitutively and exclusively expressed in the mononuclear cells of the extraembryonic trophectoderm.

The protein resides in the secreted. In terms of biological role, paracrine hormone primarily responsible for maternal recognition of pregnancy. Interacts with endometrial receptors, probably type I interferon receptors, and blocks estrogen receptor expression, preventing the estrogen-induced increase in oxytocin receptor expression in the endometrium. This results in the suppression of the pulsatile endometrial release of the luteolytic hormone prostaglandin F2-alpha, hindering the regression of the corpus luteum (luteolysis) and therefore a return to ovarian cyclicity. This, and a possible direct effect of IFN-tau on prostaglandin synthesis, leads in turn to continued ovarian progesterone secretion, which stimulates the secretion by the endometrium of the nutrients required for the growth of the conceptus. In summary, displays particularly high antiviral and antiproliferative potency concurrently with particular weak cytotoxicity, high antiluteolytic activity and immunomodulatory properties. In contrast with other IFNs, IFN-tau is not virally inducible. In Ovis aries (Sheep), this protein is Interferon tau-5 (IFNT5).